A 447-amino-acid chain; its full sequence is Probable 3-deoxy-D-manno-octulosonic acid transferase, mitochondrial (447 aa).

The transit peptide at 1–32 (MKLGVFVYRLYRALTYGVSPLIHLHIRWRRLR) directs the protein to the mitochondrion. The active-site Proton acceptor is Glu-66. CMP-binding positions include 278-279 (PR), 320-322 (LGE), and 347-350 (NLSE).

Belongs to the glycosyltransferase group 1 family. Glycosyltransferase 30 subfamily. As to expression, expressed in leaves, stems and flowers.

Its subcellular location is the mitochondrion. The enzyme catalyses lipid IVA (E. coli) + CMP-3-deoxy-beta-D-manno-octulosonate = alpha-Kdo-(2-&gt;6)-lipid IVA (E. coli) + CMP + H(+). It carries out the reaction alpha-Kdo-(2-&gt;6)-lipid IVA (E. coli) + CMP-3-deoxy-beta-D-manno-octulosonate = alpha-Kdo-(2-&gt;4)-alpha-Kdo-(2-&gt;6)-lipid IVA (E. coli) + CMP + H(+). It functions in the pathway glycolipid biosynthesis; KDO(2)-lipid A biosynthesis; KDO(2)-lipid A from CMP-3-deoxy-D-manno-octulosonate and lipid IV(A): step 1/4. Its pathway is glycolipid biosynthesis; KDO(2)-lipid A biosynthesis; KDO(2)-lipid A from CMP-3-deoxy-D-manno-octulosonate and lipid IV(A): step 2/4. Its function is as follows. Involved in the biosynthesis of lipid A, a phosphorylated glycolipid that in bacteria anchors the lipopolysaccharide to the outer membrane of the cell. Catalyzes the transfer of two 3-deoxy-D-manno-octulosonate (Kdo) residues from CMP-Kdo to lipid IV(A), the tetraacyldisaccharide-1,4'-bisphosphate precursor of lipid A. Lipid A-like molecules in plants may serve as structural components of the outer membranes of mitochondria and/or chloroplasts, or may be involved in signal transduction or plant defense responses. The chain is Probable 3-deoxy-D-manno-octulosonic acid transferase, mitochondrial (KDTA) from Arabidopsis thaliana (Mouse-ear cress).